Reading from the N-terminus, the 245-residue chain is 1-(5-phosphoribosyl)-5-[(5-phosphoribosylamino)methylideneamino] imidazole-4-carboxamide isomerase (245 aa).

The active-site Proton acceptor is aspartate 7. The Proton donor role is filled by aspartate 129.

It belongs to the HisA/HisF family.

The protein resides in the cytoplasm. It catalyses the reaction 1-(5-phospho-beta-D-ribosyl)-5-[(5-phospho-beta-D-ribosylamino)methylideneamino]imidazole-4-carboxamide = 5-[(5-phospho-1-deoxy-D-ribulos-1-ylimino)methylamino]-1-(5-phospho-beta-D-ribosyl)imidazole-4-carboxamide. Its pathway is amino-acid biosynthesis; L-histidine biosynthesis; L-histidine from 5-phospho-alpha-D-ribose 1-diphosphate: step 4/9. This chain is 1-(5-phosphoribosyl)-5-[(5-phosphoribosylamino)methylideneamino] imidazole-4-carboxamide isomerase, found in Escherichia coli O17:K52:H18 (strain UMN026 / ExPEC).